Here is a 450-residue protein sequence, read N- to C-terminus: Regulator of sigma-E protease RseP (450 aa).

A helical transmembrane segment spans residues 1–21; the sequence is MLSILWNLAAFIIALGVLITV. His-22 provides a ligand contact to Zn(2+). Residues 22 to 103 lie on the Periplasmic side of the membrane; sequence HEFGHFWVAR…VGQRAAIIAA (82 aa). The active site involves Glu-23. A Zn(2+)-binding site is contributed by His-26. Residues 104-124 traverse the membrane as a helical segment; sequence GPVANFIFAIFAYWLVFIIGV. PDZ domains lie at 115 to 186 and 199 to 291; these read AYWL…APFG and HWAF…TPDT. Over 125–375 the chain is Cytoplasmic; it reads PGVRPVIGEI…QGAGMSAEFG (251 aa). A helical membrane pass occupies residues 376 to 396; sequence VIYYLMFLALISVNLGIINLF. The Periplasmic portion of the chain corresponds to 397–429; that stretch reads PLPVLDGGHLLFLAIEKLKGGPVSERVQDFSYR. Residues 430-450 traverse the membrane as a helical segment; that stretch reads IGSILLVLLMGLALFNDFSRL.

This sequence belongs to the peptidase M50B family. It depends on Zn(2+) as a cofactor.

Its subcellular location is the cell inner membrane. Its function is as follows. A site-2 regulated intramembrane protease that cleaves the peptide bond between 'Ala-108' and 'Cys-109' in the transmembrane region of RseA. Part of a regulated intramembrane proteolysis (RIP) cascade. Acts on DegS-cleaved RseA to release the cytoplasmic domain of RseA. This provides the cell with sigma-E (RpoE) activity through the proteolysis of RseA. This is Regulator of sigma-E protease RseP (rsep) from Salmonella typhimurium (strain 14028s / SGSC 2262).